A 126-amino-acid polypeptide reads, in one-letter code: Glycine cleavage system H protein (126 aa).

The Lipoyl-binding domain maps to 22–104 (VATIGITEYA…YEKAWMVKVE (83 aa)). An N6-lipoyllysine modification is found at K63.

This sequence belongs to the GcvH family. In terms of assembly, the glycine cleavage system is composed of four proteins: P, T, L and H. The cofactor is (R)-lipoate.

Its function is as follows. The glycine cleavage system catalyzes the degradation of glycine. The H protein shuttles the methylamine group of glycine from the P protein to the T protein. Functionally, is also involved in protein lipoylation via its role as an octanoyl/lipoyl carrier protein intermediate. This Staphylococcus aureus (strain JH1) protein is Glycine cleavage system H protein.